The following is a 713-amino-acid chain: Cadherin-13 (713 aa).

An N-terminal signal peptide occupies residues 1 to 22; that stretch reads MQPRTPLVLCVLLSQVLLLTSA. A propeptide spanning residues 23–138 is cleaved from the precursor; the sequence is EDLDCIPGFQ…RTSPVPRQKR (116 aa). Asn-52 and Asn-86 each carry an N-linked (GlcNAc...) asparagine glycan. Cadherin domains follow at residues 139–245, 246–363, 364–477, 478–585, and 584–690; these read SIVV…RPIF, REGP…SPKF, TKKE…GPVF, YPDP…APFI, and FIYP…VDSN. Residues Asn-382, Asn-489, Asn-500, Asn-530, Asn-598, Asn-638, and Asn-671 are each glycosylated (N-linked (GlcNAc...) asparagine). Asn-690 carries the GPI-anchor amidated asparagine lipid modification. A propeptide spans 691–713 (removed in mature form); sequence AVGALRFSLPSLLLLSLFSLACL.

In terms of assembly, by contrast to classical cadherins, homodimerization in trans is not mediated by cadherin EC1 domain strand-swapping, but instead through a homophilic adhesive interface which joins two elongated EC1-EC2 domains through a region near their Ca2+-binding sites to form a tetrahedral, X-like shape.

The protein resides in the cell membrane. Its subcellular location is the cytoplasm. Functionally, cadherins are calcium-dependent cell adhesion proteins. They preferentially interact with themselves in a homophilic manner in connecting cells; cadherins may thus contribute to the sorting of heterogeneous cell types. May act as a negative regulator of neural cell growth. The protein is Cadherin-13 (CDH13) of Pongo abelii (Sumatran orangutan).